Here is a 335-residue protein sequence, read N- to C-terminus: Holliday junction branch migration complex subunit RuvB (335 aa).

Residues 1–181 (MERIVEVEKF…FGMHFRLQFY (181 aa)) form a large ATPase domain (RuvB-L) region. Residues Leu-20, Arg-21, Gly-62, Lys-65, Thr-66, Thr-67, 128 to 130 (EDF), Arg-171, Tyr-181, and Arg-218 each bind ATP. Mg(2+) is bound at residue Thr-66. A small ATPAse domain (RuvB-S) region spans residues 182–252 (TPQELAQIIT…RTQKALEALG (71 aa)). The head domain (RuvB-H) stretch occupies residues 255 to 335 (ERGFDELDLK…LTPNIQNSLF (81 aa)). 2 residues coordinate DNA: Arg-309 and Arg-314.

The protein belongs to the RuvB family. In terms of assembly, homohexamer. Forms an RuvA(8)-RuvB(12)-Holliday junction (HJ) complex. HJ DNA is sandwiched between 2 RuvA tetramers; dsDNA enters through RuvA and exits via RuvB. An RuvB hexamer assembles on each DNA strand where it exits the tetramer. Each RuvB hexamer is contacted by two RuvA subunits (via domain III) on 2 adjacent RuvB subunits; this complex drives branch migration. In the full resolvosome a probable DNA-RuvA(4)-RuvB(12)-RuvC(2) complex forms which resolves the HJ.

The protein localises to the cytoplasm. It carries out the reaction ATP + H2O = ADP + phosphate + H(+). The RuvA-RuvB-RuvC complex processes Holliday junction (HJ) DNA during genetic recombination and DNA repair, while the RuvA-RuvB complex plays an important role in the rescue of blocked DNA replication forks via replication fork reversal (RFR). RuvA specifically binds to HJ cruciform DNA, conferring on it an open structure. The RuvB hexamer acts as an ATP-dependent pump, pulling dsDNA into and through the RuvAB complex. RuvB forms 2 homohexamers on either side of HJ DNA bound by 1 or 2 RuvA tetramers; 4 subunits per hexamer contact DNA at a time. Coordinated motions by a converter formed by DNA-disengaged RuvB subunits stimulates ATP hydrolysis and nucleotide exchange. Immobilization of the converter enables RuvB to convert the ATP-contained energy into a lever motion, pulling 2 nucleotides of DNA out of the RuvA tetramer per ATP hydrolyzed, thus driving DNA branch migration. The RuvB motors rotate together with the DNA substrate, which together with the progressing nucleotide cycle form the mechanistic basis for DNA recombination by continuous HJ branch migration. Branch migration allows RuvC to scan DNA until it finds its consensus sequence, where it cleaves and resolves cruciform DNA. In Nitratiruptor sp. (strain SB155-2), this protein is Holliday junction branch migration complex subunit RuvB.